The sequence spans 129 residues: Prefoldin subunit 4 (129 aa).

Met1 carries the N-acetylmethionine modification.

Belongs to the prefoldin subunit beta family. Heterohexamer of two PFD-alpha type and four PFD-beta type subunits.

Binds specifically to cytosolic chaperonin (c-CPN) and transfers target proteins to it. Binds to nascent polypeptide chain and promotes folding in an environment in which there are many competing pathways for nonnative proteins. This Saccharomyces cerevisiae (strain ATCC 204508 / S288c) (Baker's yeast) protein is Prefoldin subunit 4 (GIM3).